A 382-amino-acid chain; its full sequence is UDP-N-acetylglucosamine--N-acetylmuramyl-(pentapeptide) pyrophosphoryl-undecaprenol N-acetylglucosamine transferase (382 aa).

UDP-N-acetyl-alpha-D-glucosamine contacts are provided by residues Thr11–Gly13, Asn124, Arg165, Ser200, Ile254, and Gln299.

This sequence belongs to the glycosyltransferase 28 family. MurG subfamily.

Its subcellular location is the cell inner membrane. It catalyses the reaction di-trans,octa-cis-undecaprenyl diphospho-N-acetyl-alpha-D-muramoyl-L-alanyl-D-glutamyl-meso-2,6-diaminopimeloyl-D-alanyl-D-alanine + UDP-N-acetyl-alpha-D-glucosamine = di-trans,octa-cis-undecaprenyl diphospho-[N-acetyl-alpha-D-glucosaminyl-(1-&gt;4)]-N-acetyl-alpha-D-muramoyl-L-alanyl-D-glutamyl-meso-2,6-diaminopimeloyl-D-alanyl-D-alanine + UDP + H(+). It participates in cell wall biogenesis; peptidoglycan biosynthesis. Its function is as follows. Cell wall formation. Catalyzes the transfer of a GlcNAc subunit on undecaprenyl-pyrophosphoryl-MurNAc-pentapeptide (lipid intermediate I) to form undecaprenyl-pyrophosphoryl-MurNAc-(pentapeptide)GlcNAc (lipid intermediate II). This Nitratidesulfovibrio vulgaris (strain DSM 19637 / Miyazaki F) (Desulfovibrio vulgaris) protein is UDP-N-acetylglucosamine--N-acetylmuramyl-(pentapeptide) pyrophosphoryl-undecaprenol N-acetylglucosamine transferase.